Here is a 320-residue protein sequence, read N- to C-terminus: TATA box-binding protein-like 2 (320 aa).

It belongs to the TBP family. Expression is restricted to the gonads, and is higher in the ovary than the testis.

The protein resides in the nucleus. Functionally, TATA box-binding transcription factor. Members of the TBP family are differentially required to regulate transcription and development during early embryogenesis. Required for gastrulation. Regulates a large subset of genes that are ventrally expressed. Binds to a subset of promoters. This chain is TATA box-binding protein-like 2, found in Xenopus laevis (African clawed frog).